The following is a 107-amino-acid chain: Acetyl-CoA acetyltransferase (107 aa).

Cys-88 (acyl-thioester intermediate) is an active-site residue.

The protein belongs to the thiolase-like superfamily. Thiolase family. In terms of assembly, homotetramer.

The protein localises to the cytoplasm. It carries out the reaction 2 acetyl-CoA = acetoacetyl-CoA + CoA. Its function is as follows. Catalyzes the condensation of two molecules of acetyl-CoA to produce acetoacetyl-CoA. This chain is Acetyl-CoA acetyltransferase (thi), found in Clostridioides difficile (Peptoclostridium difficile).